Reading from the N-terminus, the 509-residue chain is Anaerobic nitric oxide reductase transcription regulator NorR (509 aa).

Asp-56 carries the post-translational modification 4-aspartylphosphate. The region spanning 186-415 is the Sigma-54 factor interaction domain; sequence MIGRSPAMDR…LEHAIHRAAV (230 aa). Residues 214–221 and 277–286 contribute to the ATP site; these read GETGVGKE and ADKGTLFLDE. Positions 484-503 form a DNA-binding region, H-T-H motif; it reads WAATARALEMDGGNLHRLAR.

It participates in nitrogen metabolism; nitric oxide reduction. Its function is as follows. Required for the expression of anaerobic nitric oxide (NO) reductase, acts as a transcriptional activator for at least the norVW operon. Activation also requires sigma-54. In Aeromonas salmonicida (strain A449), this protein is Anaerobic nitric oxide reductase transcription regulator NorR.